A 30-amino-acid chain; its full sequence is Photosystem I reaction center subunit XII (30 aa).

The helical transmembrane segment at 6-26 (VFTILAIALVPAVMAALLGSA) threads the bilayer.

The protein belongs to the PsaM family.

Its subcellular location is the cellular thylakoid membrane. This is Photosystem I reaction center subunit XII from Synechococcus sp. (strain JA-3-3Ab) (Cyanobacteria bacterium Yellowstone A-Prime).